A 515-amino-acid chain; its full sequence is Fatty acyl-CoA reductase 1 (515 aa).

Residues methionine 1 to asparagine 465 lie on the Cytoplasmic side of the membrane. Positions serine 451–phenylalanine 507 are necessary and sufficient for PEX19-mediated localization into peroxisome membrane. A helical transmembrane segment spans residues isoleucine 466–isoleucine 483. The Peroxisomal segment spans residues alanine 484–tyrosine 515.

Belongs to the fatty acyl-CoA reductase family. In terms of assembly, interacts with PEX19; PEX19 mediates the targeting of FAR1 to peroxisomes. In terms of tissue distribution, widely expressed. Expressed in all tissues examined. Highest expression seen in preputial gland. Expressed in the brain where large quantities of ether lipids are synthesized.

The protein resides in the peroxisome membrane. The catalysed reaction is a long-chain fatty acyl-CoA + 2 NADPH + 2 H(+) = a long-chain primary fatty alcohol + 2 NADP(+) + CoA. It carries out the reaction hexadecanoyl-CoA + 2 NADPH + 2 H(+) = hexadecan-1-ol + 2 NADP(+) + CoA. It catalyses the reaction octadecanoyl-CoA + 2 NADPH + 2 H(+) = octadecan-1-ol + 2 NADP(+) + CoA. The enzyme catalyses (9Z)-octadecenoyl-CoA + 2 NADPH + 2 H(+) = (9Z)-octadecen-1-ol + 2 NADP(+) + CoA. The catalysed reaction is (9Z,12Z)-octadecadienoyl-CoA + 2 NADPH + 2 H(+) = (9Z,12Z)-octadecadien-1-ol + 2 NADP(+) + CoA. It carries out the reaction eicosanoyl-CoA + 2 NADPH + 2 H(+) = eicosan-1-ol + 2 NADP(+) + CoA. It catalyses the reaction 16-methylheptadecanoyl-CoA + 2 NADPH + 2 H(+) = 16-methylheptadecan-1-ol + 2 NADP(+) + CoA. The enzyme catalyses 18-methylnonadecanoyl-CoA + 2 NADPH + 2 H(+) = 18-methylnonadecan-1-ol + 2 NADP(+) + CoA. Its function is as follows. Catalyzes the reduction of saturated and unsaturated C16 or C18 fatty acyl-CoA to fatty alcohols. It plays an essential role in the production of ether lipids/plasmalogens which synthesis requires fatty alcohols. In parallel, it is also required for wax monoesters production since fatty alcohols also constitute a substrate for their synthesis. In Mus musculus (Mouse), this protein is Fatty acyl-CoA reductase 1.